We begin with the raw amino-acid sequence, 477 residues long: Mitochondrial adenyl nucleotide antiporter SLC25A24 (477 aa).

A regulatory N-terminal domain region spans residues 1-173; sequence MLRWLRGFVL…RFWKHSTGID (173 aa). Residues 1–197 are Mitochondrial intermembrane-facing; it reads MLRWLRGFVL…EKKSGQWWRQ (197 aa). 4 EF-hand domains span residues 19–54, 61–85, 86–121, and 122–157; these read EPPT…LGIP, EKIF…KYLK, DHEK…LGLT, and ISEQ…NPVT. Residues Asp32, Asn34, Asp36, Val38, Glu43, Asp68, Asn70, Asp72, Lys74, Glu79, Asp99, Asn101, Asp103, Lys105, Glu110, Asp135, Asp137, Thr139, Thr141, and Glu146 each contribute to the Ca(2+) site. Residues 159 to 168 form a linker region region; that stretch reads IEEIIRFWKH. The C-terminal transmembrane transporter domain stretch occupies residues 174 to 477; that stretch reads IGDSLTIPDE…MKQTLGVTQK (304 aa). Solcar repeat units lie at residues 192 to 278, 286 to 371, and 383 to 471; these read GQWW…YKKL, IGTF…LKSH, and PGVM…MKQT. A helical transmembrane segment spans residues 198–215; that stretch reads LLAGGVAGAVSRTSTAPL. Topologically, residues 216-252 are mitochondrial matrix; that stretch reads DRLKVMMQVHGSKSAKMNIYGGFQQMVKEGGIRSLWR. Residues 253-272 traverse the membrane as a helical segment; it reads GNGTNVIKIAPETAVKFWAY. The Mitochondrial intermembrane portion of the chain corresponds to 273–295; sequence EQYKKLLTEEGQKIGTFERFVSG. A helical transmembrane segment spans residues 296–309; the sequence is SMAGATAQTFIYPM. Topologically, residues 310–345 are mitochondrial matrix; sequence EVLKTRLAVGKTGQYSGMFDCAKKILKYEGMGAFYK. Lys320 carries the post-translational modification N6-acetyllysine; alternate. At Lys320 the chain carries N6-succinyllysine; alternate. Lys336 carries the post-translational modification N6-acetyllysine. Residues 346–365 form a helical membrane-spanning segment; that stretch reads GYVPNLLGIIPYAGIDLAVY. At 366–388 the chain is on the mitochondrial intermembrane side; that stretch reads ELLKSHWLDNFAKDSVNPGVMVL. The chain crosses the membrane as a helical span at residues 389–406; it reads LGCGALSSTCGQLASYPL. Topologically, residues 407–445 are mitochondrial matrix; that stretch reads ALVRTRMQAQAMIEKSPQLNMVGLFRRILSKEGLPGLYR. At Lys437 the chain carries N6-acetyllysine; alternate. Lys437 is modified (N6-succinyllysine; alternate). The helical transmembrane segment at 446–465 threads the bilayer; that stretch reads GITPNFMKVLPAVGISYVVY. Topologically, residues 466–477 are mitochondrial intermembrane; sequence ENMKQTLGVTQK.

The protein belongs to the mitochondrial carrier (TC 2.A.29) family. Monomer.

It is found in the mitochondrion inner membrane. It catalyses the reaction Mg(2+)(out) + phosphate(in) + ATP(out) = Mg(2+)(in) + phosphate(out) + ATP(in). The catalysed reaction is ADP(out) + phosphate(in) + H(+)(out) = ADP(in) + phosphate(out) + H(+)(in). The enzyme catalyses AMP(out) + phosphate(in) = AMP(in) + phosphate(out). It carries out the reaction phosphate(in) + ATP(out) + 2 H(+)(out) = phosphate(out) + ATP(in) + 2 H(+)(in). It catalyses the reaction dADP(in) + ADP(out) = dADP(out) + ADP(in). The catalysed reaction is Mg(2+)(in) + ADP(out) + ATP(in) + H(+)(out) = Mg(2+)(out) + ADP(in) + ATP(out) + H(+)(in). The enzyme catalyses ADP(out) + diphosphate(in) = ADP(in) + diphosphate(out). It carries out the reaction dAMP(in) + ADP(out) + H(+)(out) = dAMP(out) + ADP(in) + H(+)(in). It catalyses the reaction 3'-AMP(in) + ADP(out) + H(+)(out) = 3'-AMP(out) + ADP(in) + H(+)(in). The catalysed reaction is dAMP(out) + phosphate(in) = dAMP(in) + phosphate(out). The enzyme catalyses 3'-AMP(out) + phosphate(in) = 3'-AMP(in) + phosphate(out). It carries out the reaction dADP(out) + phosphate(in) + H(+)(out) = dADP(in) + phosphate(out) + H(+)(in). Its activity is regulated as follows. Activated by an increase in cytosolic calcium levels that induce a conformational change of the N-terminal regulatory domain, uncapping the channel and allowing transport. Inhibited by bathophenanthroline, mersalyl, p-hydroxymercuribenzoate, bromcresol purple and tannic acid. Functionally, electroneutral antiporter that mediates the transport of adenyl nucleotides through the inner mitochondrial membrane. Originally identified as an ATP-magnesium/inorganic phosphate antiporter, it also acts as a broad specificity adenyl nucleotide antiporter. By regulating the mitochondrial matrix adenyl nucleotide pool could adapt to changing cellular energetic demands and indirectly regulate adenyl nucleotide-dependent metabolic pathways. In vitro, a low activity is also observed with guanyl and pyrimidine nucleotides. May play a role in protecting cells against oxidative stress-induced cell death, by buffering calcium levels in the mitochondrial matrix through the formation of calcium-phosphate precipitates. This chain is Mitochondrial adenyl nucleotide antiporter SLC25A24 (SLC25A24), found in Bos taurus (Bovine).